The following is a 102-amino-acid chain: MAVICNTCGLPEDLCACGELAKDSTKIIIRLETRRFKKKGTMIEGLDPKLNNLETVAKELKSKYACGGTAKEGYIFLQGDHRDTIKDTLTDLGFAEESIELH.

This sequence belongs to the SUI1 family.

The protein is Protein translation factor SUI1 homolog of Nitrosopumilus maritimus (strain SCM1).